Here is a 447-residue protein sequence, read N- to C-terminus: Methionine aminopeptidase 2-2 (447 aa).

Residues 1–89 (MAAQTAPELA…PRIPLTTLFP (89 aa)) form a disordered region. Over residues 15-30 (NKNSGSAEANVVSNGG) the composition is skewed to polar residues. Residues 34-47 (DDAENEGDSDDDKD) show a composition bias toward acidic residues. A compositionally biased stretch (basic residues) spans 59–73 (KKKKKKRSKKKKKAA). His197 contacts substrate. Positions 217, 228, and 297 each coordinate a divalent metal cation. His305 is a substrate binding site. Residues Glu333 and Glu428 each coordinate a divalent metal cation.

This sequence belongs to the peptidase M24A family. Methionine aminopeptidase eukaryotic type 2 subfamily. It depends on Co(2+) as a cofactor. Requires Zn(2+) as cofactor. Mn(2+) is required as a cofactor. The cofactor is Fe(2+).

The protein resides in the cytoplasm. The enzyme catalyses Release of N-terminal amino acids, preferentially methionine, from peptides and arylamides.. Cotranslationally removes the N-terminal methionine from nascent proteins. The N-terminal methionine is often cleaved when the second residue in the primary sequence is small and uncharged (Met-Ala-, Cys, Gly, Pro, Ser, Thr, or Val). The chain is Methionine aminopeptidase 2-2 from Arthroderma otae (strain ATCC MYA-4605 / CBS 113480) (Microsporum canis).